A 103-amino-acid chain; its full sequence is Methane monooxygenase component D (103 aa).

As to quaternary structure, the soluble methane monooxygenase (sMMO) consists of four components A/MMOH (composed of alpha/MmoX, beta/MmoY and gamma/MmoZ), B/MMOB (MmoB), C/MMOR (MmoC) and D/MMOD (MmoD).

This is Methane monooxygenase component D (mmoD) from Methylococcus capsulatus (strain ATCC 33009 / NCIMB 11132 / Bath).